The chain runs to 153 residues: uncharacterized protein (153 aa).

The N-terminal stretch at 1–22 is a signal peptide; it reads MKAFNKLFSLVVASVLVFSLAG. A lipid anchor (N-palmitoyl cysteine) is attached at Cys23. A lipid anchor (S-diacylglycerol cysteine) is attached at Cys23.

This sequence to L.monocytogenes lmo0207.

The protein resides in the cell membrane. This is an uncharacterized protein from Escherichia coli (strain K12).